The primary structure comprises 354 residues: uncharacterized protein (354 aa).

Residues 48-285 (VETWEISKIY…DEGYEVVLKG (238 aa)) enclose the ABC transporter domain. 87–94 (GPNGAGKT) provides a ligand contact to ATP.

It belongs to the ABC transporter superfamily.

This is an uncharacterized protein from Synechocystis sp. (strain ATCC 27184 / PCC 6803 / Kazusa).